The sequence spans 103 residues: Small ribosomal subunit protein uS10 (103 aa).

The protein belongs to the universal ribosomal protein uS10 family. Part of the 30S ribosomal subunit.

Involved in the binding of tRNA to the ribosomes. This Chlorobaculum tepidum (strain ATCC 49652 / DSM 12025 / NBRC 103806 / TLS) (Chlorobium tepidum) protein is Small ribosomal subunit protein uS10.